A 94-amino-acid chain; its full sequence is Co-chaperonin GroES (94 aa).

This sequence belongs to the GroES chaperonin family. In terms of assembly, heptamer of 7 subunits arranged in a ring. Interacts with the chaperonin GroEL.

Its subcellular location is the cytoplasm. Its function is as follows. Together with the chaperonin GroEL, plays an essential role in assisting protein folding. The GroEL-GroES system forms a nano-cage that allows encapsulation of the non-native substrate proteins and provides a physical environment optimized to promote and accelerate protein folding. GroES binds to the apical surface of the GroEL ring, thereby capping the opening of the GroEL channel. This chain is Co-chaperonin GroES, found in Streptococcus pneumoniae (strain CGSP14).